The sequence spans 123 residues: Large ribosomal subunit protein uL14 (123 aa).

Belongs to the universal ribosomal protein uL14 family. As to quaternary structure, part of the 50S ribosomal subunit. Forms a cluster with proteins L3 and L19. In the 70S ribosome, L14 and L19 interact and together make contacts with the 16S rRNA in bridges B5 and B8.

Binds to 23S rRNA. Forms part of two intersubunit bridges in the 70S ribosome. The sequence is that of Large ribosomal subunit protein uL14 from Actinobacillus succinogenes (strain ATCC 55618 / DSM 22257 / CCUG 43843 / 130Z).